Consider the following 240-residue polypeptide: ATP-dependent dethiobiotin synthetase BioD (240 aa).

15-20 provides a ligand contact to ATP; that stretch reads EIGKTF. Thr-19 contacts Mg(2+). Lys-40 is an active-site residue. ATP contacts are provided by residues Asp-57, 118 to 121, and 178 to 179; these read EGVG and NR. Residues Asp-57 and Glu-118 each contribute to the Mg(2+) site.

It belongs to the dethiobiotin synthetase family. In terms of assembly, homodimer. The cofactor is Mg(2+).

The protein localises to the cytoplasm. It catalyses the reaction (7R,8S)-7,8-diammoniononanoate + CO2 + ATP = (4R,5S)-dethiobiotin + ADP + phosphate + 3 H(+). Its pathway is cofactor biosynthesis; biotin biosynthesis; biotin from 7,8-diaminononanoate: step 1/2. Functionally, catalyzes a mechanistically unusual reaction, the ATP-dependent insertion of CO2 between the N7 and N8 nitrogen atoms of 7,8-diaminopelargonic acid (DAPA, also called 7,8-diammoniononanoate) to form a ureido ring. The chain is ATP-dependent dethiobiotin synthetase BioD from Burkholderia thailandensis (strain ATCC 700388 / DSM 13276 / CCUG 48851 / CIP 106301 / E264).